Reading from the N-terminus, the 452-residue chain is Exoglucanase 1 (452 aa).

Residues 1–18 form the signal peptide; the sequence is MFSKFALTGSLLAGAVNA. N-linked (GlcNAc...) asparagine glycosylation is present at N75. E230 serves as the catalytic Nucleophile. E235 acts as the Proton donor in catalysis. N-linked (GlcNAc...) asparagine glycans are attached at residues N335 and N360.

This sequence belongs to the glycosyl hydrolase 7 (cellulase C) family.

The enzyme catalyses Hydrolysis of (1-&gt;4)-beta-D-glucosidic linkages in cellulose and cellotetraose, releasing cellobiose from the non-reducing ends of the chains.. The biological conversion of cellulose to glucose generally requires three types of hydrolytic enzymes: (1) Endoglucanases which cut internal beta-1,4-glucosidic bonds; (2) Exocellobiohydrolases that cut the disaccharide cellobiose from the non-reducing end of the cellulose polymer chain; (3) Beta-1,4-glucosidases which hydrolyze the cellobiose and other short cello-oligosaccharides to glucose. This chain is Exoglucanase 1 (CBH-1), found in Cryphonectria parasitica (Chestnut blight fungus).